A 76-amino-acid polypeptide reads, in one-letter code: Acyl carrier protein (76 aa).

Residues 2 to 76 (SSIFDKVKAI…SAVEYIKENQ (75 aa)) enclose the Carrier domain. Residue Ser-36 is modified to O-(pantetheine 4'-phosphoryl)serine.

This sequence belongs to the acyl carrier protein (ACP) family. Post-translationally, 4'-phosphopantetheine is transferred from CoA to a specific serine of apo-ACP by AcpS. This modification is essential for activity because fatty acids are bound in thioester linkage to the sulfhydryl of the prosthetic group.

Its subcellular location is the cytoplasm. The protein operates within lipid metabolism; fatty acid biosynthesis. Its function is as follows. Carrier of the growing fatty acid chain in fatty acid biosynthesis. The protein is Acyl carrier protein of Heliobacterium modesticaldum (strain ATCC 51547 / Ice1).